A 723-amino-acid polypeptide reads, in one-letter code: Nucleolar protein 11 (723 aa).

Lys-346 carries the post-translational modification N6-methyllysine. Residues 549–572 (FGPEDGNCSEDSQQLNDKPADTAH) form a disordered region.

Interacts with UTP4. Interacts with FBL/fibrillarin in a transcription-dependent manner. May associate with the proposed t-UTP subcomplex of the SSU processome containing at least UTP4, WDR43, HEATR1, UTP15, WDR75.

The protein resides in the nucleus. Its subcellular location is the nucleolus. Ribosome biogenesis factor. May be required for both optimal rDNA transcription and small subunit (SSU) pre-rRNA processing at sites A', A0, 1 and 2b. The sequence is that of Nucleolar protein 11 (Nol11) from Mus musculus (Mouse).